Consider the following 454-residue polypeptide: Bifunctional protein GlmU (454 aa).

The interval 1-226 is pyrophosphorylase; that stretch reads MLAVAVLAAG…PDEVNGINNR (226 aa). UDP-N-acetyl-alpha-D-glucosamine is bound by residues 7–10, K21, Q73, and 78–79; these read LAAG and GT. Position 103 (D103) interacts with Mg(2+). UDP-N-acetyl-alpha-D-glucosamine is bound by residues G140, E155, N170, and N224. N224 is a Mg(2+) binding site. Residues 227 to 247 are linker; it reads RQLAQCEGVLQQRLRDHWMDE. The N-acetyltransferase stretch occupies residues 248–454; that stretch reads GVTFVDPASC…WDRNTQAAQS (207 aa). UDP-N-acetyl-alpha-D-glucosamine-binding residues include R329 and K347. H359 functions as the Proton acceptor in the catalytic mechanism. UDP-N-acetyl-alpha-D-glucosamine is bound by residues Y362 and N373. Positions 376, 419, and 436 each coordinate acetyl-CoA.

This sequence in the N-terminal section; belongs to the N-acetylglucosamine-1-phosphate uridyltransferase family. In the C-terminal section; belongs to the transferase hexapeptide repeat family. Homotrimer. It depends on Mg(2+) as a cofactor.

The protein localises to the cytoplasm. It carries out the reaction alpha-D-glucosamine 1-phosphate + acetyl-CoA = N-acetyl-alpha-D-glucosamine 1-phosphate + CoA + H(+). The enzyme catalyses N-acetyl-alpha-D-glucosamine 1-phosphate + UTP + H(+) = UDP-N-acetyl-alpha-D-glucosamine + diphosphate. It participates in nucleotide-sugar biosynthesis; UDP-N-acetyl-alpha-D-glucosamine biosynthesis; N-acetyl-alpha-D-glucosamine 1-phosphate from alpha-D-glucosamine 6-phosphate (route II): step 2/2. It functions in the pathway nucleotide-sugar biosynthesis; UDP-N-acetyl-alpha-D-glucosamine biosynthesis; UDP-N-acetyl-alpha-D-glucosamine from N-acetyl-alpha-D-glucosamine 1-phosphate: step 1/1. The protein operates within bacterial outer membrane biogenesis; LPS lipid A biosynthesis. In terms of biological role, catalyzes the last two sequential reactions in the de novo biosynthetic pathway for UDP-N-acetylglucosamine (UDP-GlcNAc). The C-terminal domain catalyzes the transfer of acetyl group from acetyl coenzyme A to glucosamine-1-phosphate (GlcN-1-P) to produce N-acetylglucosamine-1-phosphate (GlcNAc-1-P), which is converted into UDP-GlcNAc by the transfer of uridine 5-monophosphate (from uridine 5-triphosphate), a reaction catalyzed by the N-terminal domain. The sequence is that of Bifunctional protein GlmU from Synechococcus sp. (strain CC9311).